The chain runs to 402 residues: Sulfate adenylyltransferase (402 aa).

It belongs to the sulfate adenylyltransferase family.

It carries out the reaction sulfate + ATP + H(+) = adenosine 5'-phosphosulfate + diphosphate. The protein operates within sulfur metabolism; hydrogen sulfide biosynthesis; sulfite from sulfate: step 1/3. This is Sulfate adenylyltransferase from Ruthia magnifica subsp. Calyptogena magnifica.